A 333-amino-acid polypeptide reads, in one-letter code: Glycerol-3-phosphate dehydrogenase [NAD(P)+] (333 aa).

NADPH contacts are provided by serine 10, tryptophan 11, and lysine 105. Lysine 105, glycine 136, and threonine 138 together coordinate sn-glycerol 3-phosphate. NADPH is bound at residue alanine 140. The sn-glycerol 3-phosphate site is built by lysine 191, aspartate 244, serine 254, arginine 255, and asparagine 256. Lysine 191 serves as the catalytic Proton acceptor. Arginine 255 provides a ligand contact to NADPH. NADPH is bound by residues valine 279 and glutamate 281.

Belongs to the NAD-dependent glycerol-3-phosphate dehydrogenase family.

The protein localises to the cytoplasm. The catalysed reaction is sn-glycerol 3-phosphate + NAD(+) = dihydroxyacetone phosphate + NADH + H(+). The enzyme catalyses sn-glycerol 3-phosphate + NADP(+) = dihydroxyacetone phosphate + NADPH + H(+). The protein operates within membrane lipid metabolism; glycerophospholipid metabolism. Functionally, catalyzes the reduction of the glycolytic intermediate dihydroxyacetone phosphate (DHAP) to sn-glycerol 3-phosphate (G3P), the key precursor for phospholipid synthesis. The sequence is that of Glycerol-3-phosphate dehydrogenase [NAD(P)+] from Trichlorobacter lovleyi (strain ATCC BAA-1151 / DSM 17278 / SZ) (Geobacter lovleyi).